The primary structure comprises 218 residues: 2-phospho-L-lactate guanylyltransferase (218 aa).

It belongs to the CofC family. In terms of assembly, homodimer.

The enzyme catalyses (2S)-2-phospholactate + GTP + H(+) = (2S)-lactyl-2-diphospho-5'-guanosine + diphosphate. The protein operates within cofactor biosynthesis; coenzyme F420 biosynthesis. In terms of biological role, guanylyltransferase that catalyzes the activation of (2S)-2-phospholactate (2-PL) as (2S)-lactyl-2-diphospho-5'-guanosine, via the condensation of 2-PL with GTP. It is involved in the biosynthesis of coenzyme F420, a hydride carrier cofactor. The sequence is that of 2-phospho-L-lactate guanylyltransferase from Methanocaldococcus fervens (strain DSM 4213 / JCM 15782 / AG86) (Methanococcus fervens).